A 567-amino-acid polypeptide reads, in one-letter code: Urease subunit alpha 1 (567 aa).

In terms of domain architecture, Urease spans 128 to 567; it reads GAVDTHVHYI…LPLAQLYHLF (440 aa). 3 residues coordinate Ni(2+): His-133, His-135, and Lys-216. Lys-216 carries the post-translational modification N6-carboxylysine. A substrate-binding site is contributed by His-218. The Ni(2+) site is built by His-245 and His-271. His-319 acts as the Proton donor in catalysis. A Ni(2+)-binding site is contributed by Asp-359.

It belongs to the metallo-dependent hydrolases superfamily. Urease alpha subunit family. In terms of assembly, heterotrimer of UreA (gamma), UreB (beta) and UreC (alpha) subunits. Three heterotrimers associate to form the active enzyme. The cofactor is Ni cation. Carboxylation allows a single lysine to coordinate two nickel ions.

The protein resides in the cytoplasm. It carries out the reaction urea + 2 H2O + H(+) = hydrogencarbonate + 2 NH4(+). Its pathway is nitrogen metabolism; urea degradation; CO(2) and NH(3) from urea (urease route): step 1/1. This chain is Urease subunit alpha 1, found in Psychrobacter cryohalolentis (strain ATCC BAA-1226 / DSM 17306 / VKM B-2378 / K5).